Here is a 456-residue protein sequence, read N- to C-terminus: Frizzled/smoothened-like sans CRD protein F (456 aa).

A signal peptide spans 1–30; that stretch reads MIFNNLKNQNKIINFLIIFYFLSFLKQIES. Over 31-92 the chain is Extracellular; sequence QSINITSSSS…PFFTINEWNK (62 aa). 3 N-linked (GlcNAc...) asparagine glycosylation sites follow: Asn34, Asn52, and Asn70. A helical transmembrane segment spans residues 93–113; sequence FLNMSLVMGTISFFSGLFLLV. Topologically, residues 114 to 127 are cytoplasmic; that stretch reads TYSPIVNKTHNRHT. Residues 128 to 148 form a helical membrane-spanning segment; the sequence is IGVMCMSFGVCLAMCSDMWNF. Residues 149–174 are Extracellular-facing; the sequence is GSNFTEKSICPSPGQYLSTSNARCLS. N-linked (GlcNAc...) asparagine glycosylation is present at Asn151. Residues 175–195 form a helical membrane-spanning segment; that stretch reads SGIFLQFGGVFGFLNWTLLSF. Residues 196-211 lie on the Cytoplasmic side of the membrane; sequence DLFMNIKGIITKNYDK. A helical membrane pass occupies residues 212-232; that stretch reads YYVSGTFIIAIIFTFVPIVND. The Extracellular segment spans residues 233-252; sequence QYSMSYIGLGCWLGSAMYQL. A helical membrane pass occupies residues 253–273; the sequence is IFFWILLSICLIVSSVFIILI. Topologically, residues 274–297 are cytoplasmic; the sequence is LKEVYIIIKLSKQKTSLKGNIRPL. A helical membrane pass occupies residues 298–318; that stretch reads ICISITGFAFFYMFFYYISIV. The Extracellular segment spans residues 319 to 354; sequence VEGDYYERVLNEYTDCLMDPTKDISECKSPRMSVAS. The helical transmembrane segment at 355–375 threads the bilayer; it reads EFVFLLCLRLLGIGAFIFYGI. At 376–456 the chain is on the cytoplasmic side; it reads NNKVKKIWLN…ESSLNSVDEI (81 aa). The interval 403–422 is disordered; it reads ADNDKSNSNGSKVLYRTNNT.

It belongs to the G-protein coupled receptor Fz/Smo family.

The protein localises to the membrane. This Dictyostelium discoideum (Social amoeba) protein is Frizzled/smoothened-like sans CRD protein F (fscF).